We begin with the raw amino-acid sequence, 362 residues long: tRNA/tmRNA (uracil-C(5))-methyltransferase (362 aa).

Residues glutamine 182, tyrosine 210, asparagine 215, glutamate 231, and aspartate 293 each contribute to the S-adenosyl-L-methionine site. Cysteine 318 acts as the Nucleophile in catalysis. Glutamate 352 (proton acceptor) is an active-site residue.

It belongs to the class I-like SAM-binding methyltransferase superfamily. RNA M5U methyltransferase family. TrmA subfamily.

The catalysed reaction is uridine(54) in tRNA + S-adenosyl-L-methionine = 5-methyluridine(54) in tRNA + S-adenosyl-L-homocysteine + H(+). It carries out the reaction uridine(341) in tmRNA + S-adenosyl-L-methionine = 5-methyluridine(341) in tmRNA + S-adenosyl-L-homocysteine + H(+). In terms of biological role, dual-specificity methyltransferase that catalyzes the formation of 5-methyluridine at position 54 (m5U54) in all tRNAs, and that of position 341 (m5U341) in tmRNA (transfer-mRNA). The protein is tRNA/tmRNA (uracil-C(5))-methyltransferase of Neisseria meningitidis serogroup A / serotype 4A (strain DSM 15465 / Z2491).